Reading from the N-terminus, the 407-residue chain is Multifunctional CCA protein (407 aa).

Gly-8 and Arg-11 together coordinate ATP. 2 residues coordinate CTP: Gly-8 and Arg-11. Asp-21 and Asp-23 together coordinate Mg(2+). 3 residues coordinate ATP: Arg-91, Arg-137, and Arg-140. Arg-91, Arg-137, and Arg-140 together coordinate CTP. In terms of domain architecture, HD spans 225-326; sequence CGDHVMRVLD…LRLLKDCDAL (102 aa).

Belongs to the tRNA nucleotidyltransferase/poly(A) polymerase family. Bacterial CCA-adding enzyme type 1 subfamily. Monomer. Can also form homodimers and oligomers. The cofactor is Mg(2+). Requires Ni(2+) as cofactor.

The enzyme catalyses a tRNA precursor + 2 CTP + ATP = a tRNA with a 3' CCA end + 3 diphosphate. It carries out the reaction a tRNA with a 3' CCA end + 2 CTP + ATP = a tRNA with a 3' CCACCA end + 3 diphosphate. Its function is as follows. Catalyzes the addition and repair of the essential 3'-terminal CCA sequence in tRNAs without using a nucleic acid template. Adds these three nucleotides in the order of C, C, and A to the tRNA nucleotide-73, using CTP and ATP as substrates and producing inorganic pyrophosphate. tRNA 3'-terminal CCA addition is required both for tRNA processing and repair. Also involved in tRNA surveillance by mediating tandem CCA addition to generate a CCACCA at the 3' terminus of unstable tRNAs. While stable tRNAs receive only 3'-terminal CCA, unstable tRNAs are marked with CCACCA and rapidly degraded. In Chromobacterium violaceum (strain ATCC 12472 / DSM 30191 / JCM 1249 / CCUG 213 / NBRC 12614 / NCIMB 9131 / NCTC 9757 / MK), this protein is Multifunctional CCA protein.